The chain runs to 503 residues: MDLSPRNRPLLDSSSLDSGSLTSLDSSVFCSEGEGEPLALGDCFTVNVGGSRFVLSQQALSCFPHTRLGKLAVVVASYRRLGALAAAPSPLELCDDANPVDNEYFFDRSSQAFRYVLHYYRTGRLHVMEQLCALSFLQEIQYWGIDELSIDSCCRDRYFRRKELSETLDFKKDTDDQESQHESEQDFSKGPCPTVRQKLWDILEKPGSSTAARIFGVISIIFVAVSIVNMALMSAELSWLNLQLLEILEYVCISWFTGEFVLRFLCVKDRCHFLRKVPNIIDLLAILPFYITLLVESLSGSHTTQELENVGRLVQVLRLLRALRMLKLGRHSTGLRSLGMTITQCYEEVGLLLLFLSVGISIFSTIEYFAEQSIPDTTFTSVPCAWWWATTSMTTVGYGDIRPDTTTGKIVAFMCILSGILVLALPIAIINDRFSACYFTLKLKEAAVRQREALKKLTKNIATDSYISVNLRDVYARSIMEMLRLKGRERASTRSSGGDDFWF.

2 disordered regions span residues 1-20 and 171-192; these read MDLSPRNRPLLDSSSLDSGS and KKDTDDQESQHESEQDFSKGPC. Residues 3–213 lie on the Cytoplasmic side of the membrane; it reads LSPRNRPLLD…EKPGSSTAAR (211 aa). Residues 10–20 are compositionally biased toward low complexity; that stretch reads LLDSSSLDSGS. Basic and acidic residues predominate over residues 171-187; the sequence is KKDTDDQESQHESEQDF. A helical membrane pass occupies residues 214-234; it reads IFGVISIIFVAVSIVNMALMS. The Extracellular segment spans residues 235–241; the sequence is AELSWLN. Residues 242–262 form a helical membrane-spanning segment; it reads LQLLEILEYVCISWFTGEFVL. Over 263-279 the chain is Cytoplasmic; that stretch reads RFLCVKDRCHFLRKVPN. The helical transmembrane segment at 280 to 300 threads the bilayer; that stretch reads IIDLLAILPFYITLLVESLSG. Over 301–312 the chain is Extracellular; sequence SHTTQELENVGR. The chain crosses the membrane as a helical; Voltage-sensor span at residues 313–334; that stretch reads LVQVLRLLRALRMLKLGRHSTG. Residues 335 to 348 are Cytoplasmic-facing; the sequence is LRSLGMTITQCYEE. Residues 349 to 369 traverse the membrane as a helical segment; that stretch reads VGLLLLFLSVGISIFSTIEYF. The Selectivity filter signature appears at 395-400; that stretch reads TVGYGD. The chain crosses the membrane as a helical span at residues 410–430; that stretch reads IVAFMCILSGILVLALPIAII. Topologically, residues 431–503 are cytoplasmic; that stretch reads NDRFSACYFT…RSSGGDDFWF (73 aa).

This sequence belongs to the potassium channel family. V (TC 1.A.1.2) subfamily. Kv8.1/KCNV1 sub-subfamily. Heteromultimer with KCNB1 and KCNB2. Interacts with KCNC4 and KCND1.

It is found in the cell membrane. Functionally, potassium channel subunit that does not form functional channels by itself. Modulates KCNB1 and KCNB2 channel activity by shifting the threshold for inactivation to more negative values and by slowing the rate of inactivation. Can down-regulate the channel activity of KCNB1, KCNB2, KCNC4 and KCND1, possibly by trapping them in intracellular membranes. The protein is Potassium voltage-gated channel subfamily V member 1 (Kcnv1) of Mus musculus (Mouse).